Consider the following 157-residue polypeptide: Protein E6 (157 aa).

Zinc fingers lie at residues 41-77 and 114-150; these read CNFC…CRVC and CQTC…CRQC.

This sequence belongs to the papillomaviridae E6 protein family. As to quaternary structure, forms homodimers. Interacts with ubiquitin-protein ligase UBE3A/E6-AP; this interaction stimulates UBE3A ubiquitin activity. Interacts with host BAK1.

It localises to the host cytoplasm. The protein resides in the host nucleus. Functionally, plays a major role in the induction and maintenance of cellular transformation. E6 associates with host UBE3A/E6-AP ubiquitin-protein ligase and modulates its activity. Protects host keratinocytes from apoptosis by mediating the degradation of host BAK1. May also inhibit host immune response. This chain is Protein E6, found in Human papillomavirus type 5b.